The primary structure comprises 269 residues: Cyclic AMP-dependent transcription factor ATF-1 (269 aa).

A disordered region spans residues 1 to 90; sequence MEDSHKSNTT…GEGENPSISA (90 aa). Residues 9–18 are compositionally biased toward polar residues; it reads TTETASQPGS. The region spanning 31–90 is the KID domain; the sequence is QVSSLSESEESQDSSDSIGSSQKAHGILARRPSYRKILKDLSSEDTRGRKGEGENPSISA. A Phosphoserine; by CaMK1, CDK3, RPS6KA4 and RPS6KA5 modification is found at Ser-63. A compositionally biased stretch (basic and acidic residues) spans 67–83; the sequence is ILKDLSSEDTRGRKGEG. A Phosphoserine; by HIPK2 modification is found at Ser-196. Lys-206 participates in a covalent cross-link: Glycyl lysine isopeptide (Lys-Gly) (interchain with G-Cter in SUMO2). Residues 211 to 269 enclose the bZIP domain; that stretch reads QLRREIRLMKNREAARECRRKKKEYVKCLENRVAVLENQNKTLIEELKTLKDLYSHKSV. Positions 213–237 are basic motif; that stretch reads RREIRLMKNREAARECRRKKKEYVK. The tract at residues 239–260 is leucine-zipper; the sequence is LENRVAVLENQNKTLIEELKTL.

This sequence belongs to the bZIP family. ATF subfamily. Binds DNA as a dimer. Interacts with HIPK2 and CDK3. Interacts with MOTS-c, a peptide produced by the mitochondrially encoded 12S rRNA MT-RNR1; the interaction occurs in the nucleus following metabolic stress. In terms of processing, phosphorylated at Ser-196 by HIPK2 in response to genotoxic stress. This phosphorylation promotes transcription repression of FTH1 and other antioxidant detoxification genes. The CDK3-mediated phosphorylation at Ser-63 promotes its transactivation and transcriptional activities. Phosphorylated at Ser-63 by RPS6KA4 and RPS6KA5 in response to mitogenic or stress stimuli.

The protein resides in the nucleus. Its function is as follows. Binds the cAMP response element (CRE) (consensus: 5'-GTGACGT[AC][AG]-3'), a sequence present in many viral and cellular promoters. Binds to the Tax-responsive element (TRE) of HTLV-I. Mediates PKA-induced stimulation of CRE-reporter genes. Represses the expression of FTH1 and other antioxidant detoxification genes. Triggers cell proliferation and transformation. The protein is Cyclic AMP-dependent transcription factor ATF-1 (Atf1) of Mus musculus (Mouse).